Consider the following 603-residue polypeptide: Leucine-rich repeat-containing protein 40 (603 aa).

The segment at 1 to 27 is disordered; sequence MAAARRARAGDPRAGFRRAAEEQSPAV. LRR repeat units follow at residues 83-104, 106-127, 129-150, 152-173, 175-196, 198-219, 221-242, 244-265, 266-286, 290-311, 313-335, 336-357, 401-422, 427-449, 451-473, 474-495, 497-518, 520-541, 544-565, and 567-588; these read DLTK…VRLL, ALTV…LGQL, NLQK…LLQL, HLKG…FGQL, SLEE…FALL, NLVR…ISAM, SLRQ…LASM, SLEQ…PSCK, LLKE…ENLK, SLSV…ITLL, KLER…GNLS, QLKF…LLQK, TLKL…VFSA, PVTS…VELK, SVCD…CTLH, KLTH…MEAL, RLQV…LYRM, ALET…QLKK, QLGT…LGNC, and TLRT…ILAK.

The protein is Leucine-rich repeat-containing protein 40 (LRRC40) of Gallus gallus (Chicken).